Reading from the N-terminus, the 388-residue chain is Phosphoglycerate kinase (388 aa).

Substrate contacts are provided by residues 21–23, arginine 36, 59–62, arginine 114, and arginine 147; these read DLN and HLGR. ATP is bound by residues lysine 198, glutamate 315, and 341–344; that span reads GGDT.

It belongs to the phosphoglycerate kinase family. Monomer.

It is found in the cytoplasm. The enzyme catalyses (2R)-3-phosphoglycerate + ATP = (2R)-3-phospho-glyceroyl phosphate + ADP. It functions in the pathway carbohydrate degradation; glycolysis; pyruvate from D-glyceraldehyde 3-phosphate: step 2/5. This is Phosphoglycerate kinase from Hahella chejuensis (strain KCTC 2396).